A 411-amino-acid polypeptide reads, in one-letter code: Adenylosuccinate synthetase (411 aa).

Residues 11-17 (GDEGKGK) and 39-41 (GHT) each bind GTP. The Proton acceptor role is filled by aspartate 12. The Mg(2+) site is built by aspartate 12 and glycine 39. IMP-binding positions include 12 to 15 (DEGK), 37 to 40 (NAGH), threonine 121, arginine 135, glutamine 215, threonine 230, and arginine 294. The active-site Proton donor is histidine 40. 290-296 (TTTKRPR) lines the substrate pocket. Residues arginine 296, 322–324 (KLD), and 400–402 (STS) each bind GTP.

Belongs to the adenylosuccinate synthetase family. Homodimer. The cofactor is Mg(2+).

It is found in the cytoplasm. The catalysed reaction is IMP + L-aspartate + GTP = N(6)-(1,2-dicarboxyethyl)-AMP + GDP + phosphate + 2 H(+). The protein operates within purine metabolism; AMP biosynthesis via de novo pathway; AMP from IMP: step 1/2. In terms of biological role, plays an important role in the de novo pathway of purine nucleotide biosynthesis. Catalyzes the first committed step in the biosynthesis of AMP from IMP. In Helicobacter pylori (strain Shi470), this protein is Adenylosuccinate synthetase.